The sequence spans 351 residues: MSVNTKNWQELKKPTQLDVKESSDKARKATFIAEPLERGYGLTLGNALRRVLLASLQGAAITSIKIENVLHEFSSLAGVREDVTDIVLNVKQIALKMEGEGPKRLQLSATGPAEVKAGDIAVSGDIEVMNKDLVICHLDEGATLNMELTADIGSGYVPAVQNRPADAPIGLIPVDSLYSPIRQVSYKVEKARVGQELDFDKLSLTIETDGTVTPEDAVAYAARILQDQLTLFVHFEDGIPQPQSAMIGVAAEPQQDDANQLNRYLLKKVDELELSVRSANCLKNDNIIYIGDLVQKTEAEMLRTPNFGRKSLNEIKEVLSSMGLRLGMDIPGWPPENIEEMAKKLEQELLG.

An alpha N-terminal domain (alpha-NTD) region spans residues 1–236 (MSVNTKNWQE…DQLTLFVHFE (236 aa)). The tract at residues 256-351 (DDANQLNRYL…AKKLEQELLG (96 aa)) is alpha C-terminal domain (alpha-CTD).

Belongs to the RNA polymerase alpha chain family. Homodimer. The RNAP catalytic core consists of 2 alpha, 1 beta, 1 beta' and 1 omega subunit. When a sigma factor is associated with the core the holoenzyme is formed, which can initiate transcription.

It catalyses the reaction RNA(n) + a ribonucleoside 5'-triphosphate = RNA(n+1) + diphosphate. In terms of biological role, DNA-dependent RNA polymerase catalyzes the transcription of DNA into RNA using the four ribonucleoside triphosphates as substrates. This chain is DNA-directed RNA polymerase subunit alpha, found in Erythrobacter litoralis (strain HTCC2594).